The following is a 444-amino-acid chain: Protein EMP46 (444 aa).

Residues 1-46 (MTTRKTASSLQLLGKITGTKAGTKQKKMNFINGLIWLYMCVWMVHG) form the signal peptide. Residues 47–408 (KVTQKDELKW…YGKQTKGHDE (362 aa)) are Lumenal-facing. The 218-residue stretch at 52–269 (DELKWNKGYS…EILKMKLYDG (218 aa)) folds into the L-type lectin-like domain. Tyr177 contacts K(+). Cys196 and Cys230 are oxidised to a cystine. A helical membrane pass occupies residues 409 to 429 (IFSKISVWLALLIFIMITLAY). The interval 429 to 432 (YYMF) is mediates the interactions with COPI and COPII coat complexes. Topologically, residues 430 to 444 (YMFRINQDIKKVKLL) are cytoplasmic. The short motif at 440 to 444 (KVKLL) is the Di-lysine motif element.

It belongs to the EMP46/EMP47 family. In terms of assembly, interacts with EMP47 in the endoplasmic reticulum membrane in order to be transported to the Golgi apparatus. Interacts with the coatomer proteins COP1, SEC21 and SEC23.

The protein resides in the golgi apparatus membrane. It is found in the endoplasmic reticulum membrane. Involved in the secretion of glycoproteins and in nucleus architecture and gene silencing. The chain is Protein EMP46 (EMP46) from Saccharomyces cerevisiae (strain ATCC 204508 / S288c) (Baker's yeast).